The sequence spans 1460 residues: ABC transporter C family member 5 (1460 aa).

Disordered regions lie at residues 1 to 23 (MKYN…NESE) and 37 to 68 (GNNN…KKKN). The span at 37-55 (GNNNNDINNNNNINNNNDS) shows a compositional bias: low complexity. Helical transmembrane passes span 196–216 (FALS…GPIF), 238–258 (LGYY…IFLY), 320–340 (LIFA…CVGW), 425–445 (LIVV…TVYY), and 456–476 (IFAA…LPYG). Positions 196 to 482 (FALSWVHFGL…LPYGYNIYIQ (287 aa)) constitute an ABC transmembrane type-1 1 domain. Residues 537 to 567 (IKPQTNPPPPRTTPSNDKSSPSGNNSNNEKK) are disordered. A compositionally biased stretch (polar residues) spans 551–563 (SNDKSSPSGNNSN). The ABC transporter 1 domain occupies 560 to 783 (NNSNNEKKEV…INSAYGNSSL (224 aa)). Position 593-600 (593-600 (GPVGSGKS)) interacts with ATP. Helical transmembrane passes span 842-862 (MYYV…GYCI), 922-942 (AGEF…LIIV), 1014-1034 (ILVI…PIII), and 1108-1128 (WLGL…CIFI). In terms of domain architecture, ABC transmembrane type-1 2 spans 853–1166 (FLIALLGYCI…ATQQLAELET (314 aa)). An ABC transporter 2 domain is found at 1210–1444 (IIFENVVMSY…ENSLFNWLID (235 aa)). 1244–1251 (GRTGSGKS) contributes to the ATP binding site.

Belongs to the ABC transporter superfamily. ABCC family. Conjugate transporter (TC 3.A.1.208) subfamily.

The protein localises to the membrane. The chain is ABC transporter C family member 5 (abcC5) from Dictyostelium discoideum (Social amoeba).